A 208-amino-acid chain; its full sequence is Dephospho-CoA kinase (208 aa).

In terms of domain architecture, DPCK spans 11-207 (VIGLTGGIAS…EYYLELAQHD (197 aa)). Residue 19–24 (ASGKSA) participates in ATP binding.

The protein belongs to the CoaE family.

The protein resides in the cytoplasm. The catalysed reaction is 3'-dephospho-CoA + ATP = ADP + CoA + H(+). It functions in the pathway cofactor biosynthesis; coenzyme A biosynthesis; CoA from (R)-pantothenate: step 5/5. In terms of biological role, catalyzes the phosphorylation of the 3'-hydroxyl group of dephosphocoenzyme A to form coenzyme A. The protein is Dephospho-CoA kinase of Hahella chejuensis (strain KCTC 2396).